An 89-amino-acid chain; its full sequence is uncharacterized protein (89 aa).

3 helical membrane passes run 5–25 (AYLV…KRKA), 36–56 (RLWL…MQTF), and 67–87 (YGVP…YSPF).

Its subcellular location is the cell membrane. This is an uncharacterized protein from Bacillus subtilis (strain 168).